The sequence spans 1807 residues: Integrin beta-4 (1807 aa).

Positions 1 to 27 are cleaved as a signal peptide; the sequence is MAGLCSSPWVKLLLAVVLSAGLPGNMA. Over 28–713 the chain is Extracellular; it reads NRCKKAQVKS…KKKDCLPAPS (686 aa). The PSI domain occupies 29 to 73; it reads RCKKAQVKSCTECIRVDKSCAYCTDELFKERRCNTQADVLAAGCR. 8 disulfides stabilise this stretch: C30–C48, C38–C456, C41–C61, C51–C72, C245–C288, C458–C477, C469–C480, and C482–C491. Positions 131 to 340 constitute a VWFA domain; that stretch reads DLYILMDFSN…SYYEKLHKYF (210 aa). Mg(2+) is bound by residues S139 and S141. Ca(2+) contacts are provided by S141, D144, D145, and D176. The involved in NRG1- and IGF1-binding stretch occupies residues 194–199; the sequence is WPNSDP. N228, D230, P232, and E233 together coordinate Ca(2+). E233 provides a ligand contact to Mg(2+). The N-linked (GlcNAc...) asparagine glycan is linked to N327. Residue E350 participates in Ca(2+) binding. 4 I-EGF domains span residues 458–492, 493–538, 539–575, and 576–617; these read CELQ…KTCN, CSTG…HFCE, YDNF…RSCD, and CPLS…TTCE. N492 carries an N-linked (GlcNAc...) asparagine glycan. Cystine bridges form between C493/C521, C504/C519, C513/C524, C526/C537, C544/C558, C552/C563, C565/C574, C576/C599, C583/C597, C591/C602, and C604/C616. N580 is a glycosylation site (N-linked (GlcNAc...) asparagine). Residue N619 is glycosylated (N-linked (GlcNAc...) asparagine). Disulfide bonds link C628/C673, C634/C653, C637/C650, and C682/C708. N-linked (GlcNAc...) asparagine glycosylation occurs at N697. A helical transmembrane segment spans residues 714-734; the sequence is WWLIPLLIFLLLLLVLLLLLC. Residues 734–751 are palmitoylated on several cysteines; the sequence is CWKYCACCKACLGLLPCC. Over 735 to 1807 the chain is Cytoplasmic; that stretch reads WKYCACCKAC…THMDQQFFQT (1073 aa). A phosphoserine mark is found at S773, S1071, and S1121. In terms of domain architecture, Calx-beta spans 981–1086; it reads VNITIIKEQA…QVRRFQVQLS (106 aa). A disordered region spans residues 1119–1141; it reads SASPPLPRGDLGAPQNPNAKAAG. 2 consecutive Fibronectin type-III domains span residues 1131 to 1220 and 1224 to 1323; these read APQN…THQE and EPGR…TQPK. Phosphoserine occurs at positions 1386, 1389, and 1405. Residue T1418 is modified to Phosphothreonine. S1425 bears the Phosphoserine mark. At T1514 the chain carries Phosphothreonine. Fibronectin type-III domains are found at residues 1514–1609 and 1627–1723; these read TPTR…VHPQ and APGP…SQDG. Phosphoserine is present on S1776.

This sequence belongs to the integrin beta chain family. Heterodimer of an alpha and a beta subunit. Beta-4 associates with alpha-6. Interacts (via cytoplasmic region) with COL17A1 (via cytoplasmic region). Interacts (via cytoplasmic region) with DST isoform 3 (via N-terminus). Interacts (via cytoplasmic domain) with DST (via N-terminus). Interacts with RAC1. ITGA6:ITGB4 is found in a ternary complex with NRG1 and ERBB3. ITGA6:ITGB4 is found in a ternary complex with IGF1 and IGF1R. ITGA6:ITGB4 interacts with IGF2. Interacts with TMEM268; this interaction prevents ITGB4 degradation. Post-translationally, palmitoylated by DHHC3 at several cysteines of the membrane-proximal region, enhancing stability and cell surface expression. Palmitoylation also promotes secondary association with tertaspanins.

Its subcellular location is the cell membrane. The protein resides in the cell junction. It is found in the hemidesmosome. In terms of biological role, integrin alpha-6/beta-4 is a receptor for laminin. It plays a critical structural role in the hemidesmosome of epithelial cells. Is required for the regulation of keratinocyte polarity and motility. ITGA6:ITGB4 binds to NRG1 (via EGF domain) and this binding is essential for NRG1-ERBB signaling. ITGA6:ITGB4 binds to IGF1 and this binding is essential for IGF1 signaling. ITGA6:ITGB4 binds to IGF2 and this binding is essential for IGF2 signaling. This chain is Integrin beta-4 (Itgb4), found in Rattus norvegicus (Rat).